We begin with the raw amino-acid sequence, 391 residues long: 3-ketoacyl-CoA thiolase (391 aa).

The active-site Acyl-thioester intermediate is the C95. Active-site proton acceptor residues include H347 and C377.

It belongs to the thiolase-like superfamily. Thiolase family. In terms of assembly, heterotetramer of two alpha chains (FadB) and two beta chains (FadA).

It localises to the cytoplasm. It carries out the reaction an acyl-CoA + acetyl-CoA = a 3-oxoacyl-CoA + CoA. It participates in lipid metabolism; fatty acid beta-oxidation. In terms of biological role, catalyzes the final step of fatty acid oxidation in which acetyl-CoA is released and the CoA ester of a fatty acid two carbons shorter is formed. The protein is 3-ketoacyl-CoA thiolase of Pseudomonas putida (strain ATCC 47054 / DSM 6125 / CFBP 8728 / NCIMB 11950 / KT2440).